We begin with the raw amino-acid sequence, 379 residues long: Succinyl-diaminopimelate desuccinylase (379 aa).

His70 is a Zn(2+) binding site. Asp72 is an active-site residue. Residue Asp103 participates in Zn(2+) binding. Glu137 (proton acceptor) is an active-site residue. Zn(2+) is bound by residues Glu138, Glu166, and His352.

Belongs to the peptidase M20A family. DapE subfamily. As to quaternary structure, homodimer. Zn(2+) is required as a cofactor. It depends on Co(2+) as a cofactor.

The catalysed reaction is N-succinyl-(2S,6S)-2,6-diaminopimelate + H2O = (2S,6S)-2,6-diaminopimelate + succinate. The protein operates within amino-acid biosynthesis; L-lysine biosynthesis via DAP pathway; LL-2,6-diaminopimelate from (S)-tetrahydrodipicolinate (succinylase route): step 3/3. Functionally, catalyzes the hydrolysis of N-succinyl-L,L-diaminopimelic acid (SDAP), forming succinate and LL-2,6-diaminopimelate (DAP), an intermediate involved in the bacterial biosynthesis of lysine and meso-diaminopimelic acid, an essential component of bacterial cell walls. This is Succinyl-diaminopimelate desuccinylase from Burkholderia mallei (strain NCTC 10247).